Consider the following 453-residue polypeptide: Ubiquitin-associated protein 1 (453 aa).

The 47-residue stretch at 19–65 folds into the UMA domain; that stretch reads LDDVPFKLNEKFRCPSKVGLPIGFCLSDCNAILSDLQYDFNLERRTV. Residues 83–93 are compositionally biased toward basic and acidic residues; it reads EAIRTDSESER. Disordered regions lie at residues 83–119, 189–223, and 260–335; these read EAIRTDSESERQAASQDAEVGLVGGKKARPSDEQDIV, LQSQPQSSVSPPQLPPAEHRPVSPSTTPPLQAKTG, and FPKL…AGTT. Low complexity predominate over residues 189–199; it reads LQSQPQSSVSP. Positions 285–328 are enriched in polar residues; that stretch reads NLSNGTPPSLQRTASNNNTTLPQEQPVFAQNGTPKQSNPVTVTS. 2 consecutive UBA domains span residues 340–381 and 403–449; these read SPSE…LFTH and GSEE…LMTR.

Component of an ESCRT-I complex (endosomal sorting complex required for transport I).

It is found in the cytoplasm. It localises to the cytosol. The protein resides in the endosome. In terms of biological role, component of the ESCRT-I complex, a regulator of vesicular trafficking process. Binds to ubiquitinated cargo proteins and is required for the sorting of endocytic ubiquitinated cargos into multivesicular bodies (MVBs). This Danio rerio (Zebrafish) protein is Ubiquitin-associated protein 1.